A 262-amino-acid polypeptide reads, in one-letter code: Hydroxyethylthiazole kinase (262 aa).

M40 contributes to the substrate binding site. K116 and T162 together coordinate ATP. A substrate-binding site is contributed by G189.

This sequence belongs to the Thz kinase family. Requires Mg(2+) as cofactor.

The enzyme catalyses 5-(2-hydroxyethyl)-4-methylthiazole + ATP = 4-methyl-5-(2-phosphooxyethyl)-thiazole + ADP + H(+). The protein operates within cofactor biosynthesis; thiamine diphosphate biosynthesis; 4-methyl-5-(2-phosphoethyl)-thiazole from 5-(2-hydroxyethyl)-4-methylthiazole: step 1/1. In terms of biological role, catalyzes the phosphorylation of the hydroxyl group of 4-methyl-5-beta-hydroxyethylthiazole (THZ). This Clostridioides difficile (strain 630) (Peptoclostridium difficile) protein is Hydroxyethylthiazole kinase.